The chain runs to 218 residues: uncharacterized protein (218 aa).

This is an uncharacterized protein from Ureaplasma parvum serovar 3 (strain ATCC 700970).